The chain runs to 344 residues: UDP-3-O-acylglucosamine N-acyltransferase (344 aa).

Catalysis depends on His-250, which acts as the Proton acceptor.

It belongs to the transferase hexapeptide repeat family. LpxD subfamily. As to quaternary structure, homotrimer.

It catalyses the reaction a UDP-3-O-[(3R)-3-hydroxyacyl]-alpha-D-glucosamine + a (3R)-hydroxyacyl-[ACP] = a UDP-2-N,3-O-bis[(3R)-3-hydroxyacyl]-alpha-D-glucosamine + holo-[ACP] + H(+). The protein operates within bacterial outer membrane biogenesis; LPS lipid A biosynthesis. Its function is as follows. Catalyzes the N-acylation of UDP-3-O-acylglucosamine using 3-hydroxyacyl-ACP as the acyl donor. Is involved in the biosynthesis of lipid A, a phosphorylated glycolipid that anchors the lipopolysaccharide to the outer membrane of the cell. The chain is UDP-3-O-acylglucosamine N-acyltransferase from Maricaulis maris (strain MCS10) (Caulobacter maris).